The chain runs to 225 residues: NAD(P)H-quinone oxidoreductase subunit K, chloroplastic (225 aa).

Positions 43, 44, 108, and 139 each coordinate [4Fe-4S] cluster.

Belongs to the complex I 20 kDa subunit family. In terms of assembly, NDH is composed of at least 16 different subunits, 5 of which are encoded in the nucleus. [4Fe-4S] cluster is required as a cofactor.

It localises to the plastid. The protein resides in the chloroplast thylakoid membrane. The enzyme catalyses a plastoquinone + NADH + (n+1) H(+)(in) = a plastoquinol + NAD(+) + n H(+)(out). It catalyses the reaction a plastoquinone + NADPH + (n+1) H(+)(in) = a plastoquinol + NADP(+) + n H(+)(out). Its function is as follows. NDH shuttles electrons from NAD(P)H:plastoquinone, via FMN and iron-sulfur (Fe-S) centers, to quinones in the photosynthetic chain and possibly in a chloroplast respiratory chain. The immediate electron acceptor for the enzyme in this species is believed to be plastoquinone. Couples the redox reaction to proton translocation, and thus conserves the redox energy in a proton gradient. The protein is NAD(P)H-quinone oxidoreductase subunit K, chloroplastic of Helianthus annuus (Common sunflower).